The following is a 248-amino-acid chain: Coenzyme F420:L-glutamate ligase (248 aa).

GTP is bound by residues 15–18 (IPLI), 45–46 (ET), and K50. D115 contributes to the a divalent metal cation binding site. Residue N118 participates in GTP binding. A divalent metal cation is bound by residues D155, S156, and Q213. Position 211–218 (211–218 (MGQSDEGI)) interacts with GTP.

Belongs to the CofE family. As to quaternary structure, homodimer. It depends on Mg(2+) as a cofactor. The cofactor is Mn(2+). K(+) serves as cofactor.

It carries out the reaction oxidized coenzyme F420-0 + GTP + L-glutamate = oxidized coenzyme F420-1 + GDP + phosphate + H(+). It catalyses the reaction oxidized coenzyme F420-1 + GTP + L-glutamate = oxidized coenzyme F420-2 + GDP + phosphate + H(+). The protein operates within cofactor biosynthesis; coenzyme F420 biosynthesis. Functionally, catalyzes the GTP-dependent successive addition of two or more gamma-linked L-glutamates to the L-lactyl phosphodiester of 7,8-didemethyl-8-hydroxy-5-deazariboflavin (F420-0) to form coenzyme F420-0-glutamyl-glutamate (F420-2) or polyglutamated F420 derivatives. In Methanococcus maripaludis (strain C6 / ATCC BAA-1332), this protein is Coenzyme F420:L-glutamate ligase.